Here is a 1578-residue protein sequence, read N- to C-terminus: Neurexin-3 (1578 aa).

The first 27 residues, 1–27, serve as a signal peptide directing secretion; that stretch reads MSFTLHSVFFTLKVSSFLGSLVGLCLG. Residues 28 to 202 form the Laminin G-like 1 domain; sequence LEFMGLPNQW…SVQLEAEGPC (175 aa). The Extracellular segment spans residues 28 to 1503; sequence LEFMGLPNQW…EVIRESNSTT (1476 aa). N-linked (GlcNAc...) asparagine glycans are attached at residues Asn-58 and Asn-105. In terms of domain architecture, EGF-like 1 spans 198-235; it reads AEGPCGERPCENGGICFLLDGHPTCDCSTTGYGGTLCS. Disulfide bonds link Cys-202–Cys-213, Cys-207–Cys-222, and Cys-224–Cys-234. 2 consecutive Laminin G-like domains span residues 260 to 444 and 451 to 643; these read ENVA…VFKC and DPIN…KSSC. Ca(2+) is bound by residues Asp-308, Leu-325, and Met-378. 5 disulfide bridges follow: Cys-408/Cys-444, Cys-614/Cys-643, Cys-651/Cys-662, Cys-656/Cys-671, and Cys-673/Cys-683. An EGF-like 2 domain is found at 647-684; that stretch reads SAKQCDSYPCKNNAVCKDGWNRFICDCTGTGYWGRTCE. 2 Laminin G-like domains span residues 689–861 and 875–1050; these read ILSY…IDYC and DPVT…DRGC. Ca(2+) contacts are provided by Asp-736 and Leu-753. A glycan (N-linked (GlcNAc...) asparagine) is linked at Asn-761. Arg-811 contributes to the Ca(2+) binding site. 4 cysteine pairs are disulfide-bonded: Cys-1022/Cys-1050, Cys-1057/Cys-1068, Cys-1062/Cys-1077, and Cys-1079/Cys-1089. Positions 1053–1090 constitute an EGF-like 3 domain; the sequence is PSTTCQEDSCANQGVCMQQWEGFTCDCSMTSYSGNQCN. One can recognise a Laminin G-like 6 domain in the interval 1094–1294; it reads ATYIFGKSGG…NPNIKINGSV (201 aa). Ca(2+) is bound by residues Asp-1146 and Ile-1163. N-linked (GlcNAc...) asparagine glycosylation is present at Asn-1193. 2 residues coordinate Ca(2+): Ile-1245 and Asn-1247. 2 N-linked (GlcNAc...) asparagine glycosylation sites follow: Asn-1291 and Asn-1335. A disordered region spans residues 1328-1352; sequence ATTTTRKNRSTASIQPTSDDLVSSA. Positions 1337–1352 are enriched in polar residues; sequence STASIQPTSDDLVSSA. O-linked (Xyl...) (heparan sulfate) serine glycosylation is present at Ser-1351. N-linked (GlcNAc...) asparagine glycosylation occurs at Asn-1500. A helical membrane pass occupies residues 1504-1524; it reads GMVVGIVAAAALCILILLYAM. Topologically, residues 1525 to 1578 are cytoplasmic; the sequence is YKYRNRDEGSYQVDETRNYISNSAQSNGTLMKEKQASSKSGHKKQKNKDKEYYV. Residues 1546-1578 are disordered; it reads NSAQSNGTLMKEKQASSKSGHKKQKNKDKEYYV.

Belongs to the neurexin family. In terms of assembly, the laminin G-like domain 2 binds to NXPH1. Isoform 8/alpha-4B binds to alpha-dystroglycan. The cytoplasmic C-terminal region binds to CASK. Specific isoforms bind neuroligins NLGN1, NLGN2 and NLGN3. Interacts with CLSTN3. Post-translationally, O-glycosylated; contains heparan sulfate. Heparan sulfate attachment is required for synapse development by mediating interactions with neuroligins. In terms of tissue distribution, brain.

Its subcellular location is the presynaptic cell membrane. Neuronal cell surface protein that may be involved in cell recognition and cell adhesion. May mediate intracellular signaling. This is Neurexin-3 (Nrxn3) from Rattus norvegicus (Rat).